The following is a 338-amino-acid chain: Sesquiterpene synthase 1 (338 aa).

Positions 93, 228, 232, and 236 each coordinate Mg(2+). A DDXXD motif motif is present at residues 93-97 (DNISD). An NSE/DTE motif motif is present at residues 228-236 (NDIFSYNVE). Residues arginine 316 and tyrosine 317 each coordinate (2E,6E)-farnesyl diphosphate.

It belongs to the terpene synthase family. The cofactor is Mg(2+).

It catalyses the reaction (2E,6E)-farnesyl diphosphate = alpha-copaene + diphosphate. The enzyme catalyses (2E,6E)-farnesyl diphosphate = beta-copaene + diphosphate. It carries out the reaction (2E,6E)-farnesyl diphosphate = alpha-muurolene + diphosphate. The catalysed reaction is (2E,6E)-farnesyl diphosphate = gamma-muurolene + diphosphate. It catalyses the reaction (2E,6E)-farnesyl diphosphate = delta-cadinene + diphosphate. In terms of biological role, terpene cyclase that catalyzes the cyclization of farnesyl diphosphate (FPP) to various sesquiterpenes, including alpha-copaene, beta-copaene, beta-elemene, alpha-muurolene, gamma-muurolene and delta-cadinene. This chain is Sesquiterpene synthase 1, found in Postia placenta (strain ATCC 44394 / Madison 698-R) (Brown rot fungus).